Consider the following 509-residue polypeptide: Transmembrane protein 104 homolog (509 aa).

Over 1-19 (MPRLVNGREAAPTYSNLVG) the chain is Cytoplasmic. A helical membrane pass occupies residues 20–40 (FIFIFNLIVGTGALTLPGVFA). At 41–45 (RAGWM) the chain is on the extracellular side. Residues 46-66 (LSLIVIVLLAIISYMTVTFII) form a helical membrane-spanning segment. At 67-151 (EAMACANAIR…ATLFFNEFGR (85 aa)) the chain is on the cytoplasmic side. Residues 152–172 (VMFYLCLIVYLYGDLSIYSAA) form a helical membrane-spanning segment. Over 173–218 (VARSLRDVVCDQTNGTDTNNLMYWPGDFENNTSLACWKEHTISRLN) the chain is Extracellular. N-linked (GlcNAc...) asparagine glycosylation is found at Asn-186, Asn-202, and Asn-203. Residues 219 to 239 (MYRVLLIGFTLIFGPFVYFNV) traverse the membrane as a helical segment. Over 240-248 (QKTKYLQML) the chain is Cytoplasmic. Residues 249-269 (TAAFRWMAFTLMICISLKLLI) form a helical membrane-spanning segment. Residues 270 to 277 (SRGAKGHP) lie on the Extracellular side of the membrane. The helical transmembrane segment at 278-298 (ATFNVYGIPSLFGACVYSFMC) threads the bilayer. Topologically, residues 299 to 320 (HHSLPSLLAPIRHKSMVSKILS) are cytoplasmic. A helical transmembrane segment spans residues 321 to 341 (IDYIIICAFYILLAMTGIFAF). Topologically, residues 342 to 361 (ERIEDLYTLDFLPYDVAYVD) are extracellular. A helical membrane pass occupies residues 362-382 (FWSGLLICIDYFLALFPIFTL). Over 383–411 (STSFPIVAITLKNNLQSLFLDMSQYESYS) the chain is Cytoplasmic. The chain crosses the membrane as a helical span at residues 412–432 (VILRLCFPLLAIIPPFCITYF). Topologically, residues 433–439 (TESLSSL) are extracellular. Residues 440 to 460 (VAFTGTYAGTGIQYIIPVFLV) form a helical membrane-spanning segment. Residues 461–487 (YFARRTCSELLGSGVVNRFKSPFKSSA) lie on the Cytoplasmic side of the membrane. Residues 488–508 (WLVFVFIWSILCVCLVSINLF) form a helical membrane-spanning segment. Residue Ser-509 is a topological domain, extracellular.

It belongs to the TMEM104 family.

It localises to the membrane. This Drosophila melanogaster (Fruit fly) protein is Transmembrane protein 104 homolog.